Consider the following 345-residue polypeptide: Phosphate acyltransferase (345 aa).

Belongs to the PlsX family. In terms of assembly, homodimer. Probably interacts with PlsY.

The protein localises to the cytoplasm. It catalyses the reaction a fatty acyl-[ACP] + phosphate = an acyl phosphate + holo-[ACP]. The protein operates within lipid metabolism; phospholipid metabolism. Catalyzes the reversible formation of acyl-phosphate (acyl-PO(4)) from acyl-[acyl-carrier-protein] (acyl-ACP). This enzyme utilizes acyl-ACP as fatty acyl donor, but not acyl-CoA. This chain is Phosphate acyltransferase, found in Proteus mirabilis (strain HI4320).